The sequence spans 275 residues: Large ribosomal subunit protein uL2 (275 aa).

The tract at residues 223–260 (VAMNPVDHPHGGGEGRTSGGRHPVSPWGLPTKGYKTRS) is disordered.

The protein belongs to the universal ribosomal protein uL2 family. Part of the 50S ribosomal subunit. Forms a bridge to the 30S subunit in the 70S ribosome.

Its function is as follows. One of the primary rRNA binding proteins. Required for association of the 30S and 50S subunits to form the 70S ribosome, for tRNA binding and peptide bond formation. It has been suggested to have peptidyltransferase activity; this is somewhat controversial. Makes several contacts with the 16S rRNA in the 70S ribosome. The sequence is that of Large ribosomal subunit protein uL2 from Legionella pneumophila (strain Paris).